The chain runs to 141 residues: ATP synthase epsilon chain (141 aa).

This sequence belongs to the ATPase epsilon chain family. As to quaternary structure, F-type ATPases have 2 components, CF(1) - the catalytic core - and CF(0) - the membrane proton channel. CF(1) has five subunits: alpha(3), beta(3), gamma(1), delta(1), epsilon(1). CF(0) has three main subunits: a, b and c.

The protein resides in the cell inner membrane. Produces ATP from ADP in the presence of a proton gradient across the membrane. This is ATP synthase epsilon chain from Azoarcus sp. (strain BH72).